The primary structure comprises 113 residues: Putative membrane protein insertion efficiency factor (113 aa).

The protein belongs to the UPF0161 family.

It is found in the cell inner membrane. Functionally, could be involved in insertion of integral membrane proteins into the membrane. The chain is Putative membrane protein insertion efficiency factor from Campylobacter curvus (strain 525.92).